A 145-amino-acid polypeptide reads, in one-letter code: Aminoglycoside N(6')-acetyltransferase type 1 (145 aa).

Residues 1-145 (MDIRQMNKTH…ERVIFYRKRC (145 aa)) form the N-acetyltransferase domain. Substrate contacts are provided by W22, H25, Y66, and E79. Acetyl-CoA is bound by residues 81–83 (IFV) and 89–94 (QRGVAK). Substrate is bound at residue D115. Residue N120 participates in acetyl-CoA binding. A substrate-binding site is contributed by E136.

As to quaternary structure, homodimer.

The catalysed reaction is kanamycin B + acetyl-CoA = N(6')-acetylkanamycin B + CoA + H(+). Catalyzes the transfer of an acetyl group from acetyl-CoA to the 6'-amino group of aminoglycoside molecules conferring resistance to antibiotics containing the purpurosamine ring including amikacin, tobramycin, dibekacin and ribostamycin. Able to acetylate eukaryotic histone proteins. The sequence is that of Aminoglycoside N(6')-acetyltransferase type 1 from Salmonella enteritidis.